The following is a 184-amino-acid chain: Adenine phosphoribosyltransferase (184 aa).

The protein belongs to the purine/pyrimidine phosphoribosyltransferase family. Homodimer.

It localises to the cytoplasm. The catalysed reaction is AMP + diphosphate = 5-phospho-alpha-D-ribose 1-diphosphate + adenine. Its pathway is purine metabolism; AMP biosynthesis via salvage pathway; AMP from adenine: step 1/1. In terms of biological role, catalyzes a salvage reaction resulting in the formation of AMP, that is energically less costly than de novo synthesis. This Corynebacterium diphtheriae (strain ATCC 700971 / NCTC 13129 / Biotype gravis) protein is Adenine phosphoribosyltransferase.